The following is a 151-amino-acid chain: UPF0756 membrane protein LBA0919 (151 aa).

4 helical membrane passes run 4 to 24, 52 to 72, 78 to 98, and 115 to 135; these read WLFL…SLII, WGVT…QIGF, TFKT…AVLS, and LVLG…GPVI.

It belongs to the UPF0756 family.

The protein localises to the cell membrane. This Lactobacillus acidophilus (strain ATCC 700396 / NCK56 / N2 / NCFM) protein is UPF0756 membrane protein LBA0919.